A 394-amino-acid polypeptide reads, in one-letter code: Elongation factor Tu 1 (394 aa).

The tr-type G domain occupies K10–E204. The G1 stretch occupies residues G19–T26. Residue G19–T26 participates in GTP binding. Position 26 (T26) interacts with Mg(2+). Positions G60 to N64 are G2. Positions D81 to G84 are G3. GTP is bound by residues D81–H85 and N136–D139. The tract at residues N136–D139 is G4. The G5 stretch occupies residues S174–L176.

Belongs to the TRAFAC class translation factor GTPase superfamily. Classic translation factor GTPase family. EF-Tu/EF-1A subfamily. Monomer.

It localises to the cytoplasm. The catalysed reaction is GTP + H2O = GDP + phosphate + H(+). In terms of biological role, GTP hydrolase that promotes the GTP-dependent binding of aminoacyl-tRNA to the A-site of ribosomes during protein biosynthesis. This Serratia proteamaculans (strain 568) protein is Elongation factor Tu 1.